The primary structure comprises 350 residues: Protein RecA (350 aa).

66–73 contributes to the ATP binding site; it reads GPESSGKT.

The protein belongs to the RecA family.

It is found in the cytoplasm. Can catalyze the hydrolysis of ATP in the presence of single-stranded DNA, the ATP-dependent uptake of single-stranded DNA by duplex DNA, and the ATP-dependent hybridization of homologous single-stranded DNAs. It interacts with LexA causing its activation and leading to its autocatalytic cleavage. The polypeptide is Protein RecA (Dichelobacter nodosus (strain VCS1703A)).